A 118-amino-acid polypeptide reads, in one-letter code: Large ribosomal subunit protein bL19 (118 aa).

This sequence belongs to the bacterial ribosomal protein bL19 family.

Functionally, this protein is located at the 30S-50S ribosomal subunit interface and may play a role in the structure and function of the aminoacyl-tRNA binding site. The protein is Large ribosomal subunit protein bL19 of Metamycoplasma arthritidis (strain 158L3-1) (Mycoplasma arthritidis).